Here is a 377-residue protein sequence, read N- to C-terminus: Homoserine O-acetyltransferase (377 aa).

The AB hydrolase-1 domain maps to 47-355 (NAILICHALT…DYGHDAFLLE (309 aa)). Serine 153 (nucleophile) is an active-site residue. Arginine 222 provides a ligand contact to substrate. Active-site residues include aspartate 316 and histidine 349. Residue aspartate 350 coordinates substrate.

It belongs to the AB hydrolase superfamily. MetX family. Homodimer.

It localises to the cytoplasm. The catalysed reaction is L-homoserine + acetyl-CoA = O-acetyl-L-homoserine + CoA. The protein operates within amino-acid biosynthesis; L-methionine biosynthesis via de novo pathway; O-acetyl-L-homoserine from L-homoserine: step 1/1. Functionally, transfers an acetyl group from acetyl-CoA to L-homoserine, forming acetyl-L-homoserine. The protein is Homoserine O-acetyltransferase of Deferribacter desulfuricans (strain DSM 14783 / JCM 11476 / NBRC 101012 / SSM1).